The primary structure comprises 435 residues: Tol-Pal system protein TolB (435 aa).

The signal sequence occupies residues 1–20; it reads MRKIIAGVFIFVFLISNLYA.

The protein belongs to the TolB family. As to quaternary structure, the Tol-Pal system is composed of five core proteins: the inner membrane proteins TolA, TolQ and TolR, the periplasmic protein TolB and the outer membrane protein Pal. They form a network linking the inner and outer membranes and the peptidoglycan layer.

It localises to the periplasm. Its function is as follows. Part of the Tol-Pal system, which plays a role in outer membrane invagination during cell division and is important for maintaining outer membrane integrity. The sequence is that of Tol-Pal system protein TolB from Francisella tularensis subsp. holarctica (strain LVS).